A 382-amino-acid chain; its full sequence is tRNA-queuosine alpha-mannosyltransferase (382 aa).

The protein belongs to the glycosyltransferase group 1 family. Glycosyltransferase 4 subfamily.

The protein resides in the cytoplasm. It localises to the nucleus. The catalysed reaction is queuosine(34) in tRNA(Asp) + GDP-alpha-D-mannose = O-4''-alpha-D-mannosylqueuosine(34) in tRNA(Asp) + GDP + H(+). Functionally, glycosyltransferase that specifically catalyzes mannosylation of cytoplasmic tRNA(Asp) modified with queuosine at position 34 (queuosine(34)). Mannosylates the cyclopentene moiety of queuosine(34) in tRNA(Asp) to form mannosyl-queuosine(34). Mannosylation of queuosine(34) in tRNA(Asp) is required to slow-down elongation at cognate codons, GAC and GAU, thereby regulating protein translation. This is tRNA-queuosine alpha-mannosyltransferase (GTDC1) from Gallus gallus (Chicken).